A 169-amino-acid chain; its full sequence is Transmembrane protein B169L (169 aa).

2 helical membrane-spanning segments follow: residues 28 to 48 (NPFI…FAIC) and 60 to 80 (TAIY…YVLN). N-linked (GlcNAc...) asparagine; by host glycosylation is present at Asn-88. The interval 107–169 (DEIIPPISPP…EVIMPSQYNN (63 aa)) is disordered. The segment covering 144–154 (SKPASSADSKP) has biased composition (low complexity).

It belongs to the asfivirus B169L family.

It localises to the host membrane. Its subcellular location is the virion. This Ornithodoros (relapsing fever ticks) protein is Transmembrane protein B169L.